The sequence spans 304 residues: Glycine--tRNA ligase alpha subunit (304 aa).

Belongs to the class-II aminoacyl-tRNA synthetase family. As to quaternary structure, tetramer of two alpha and two beta subunits.

The protein resides in the cytoplasm. The enzyme catalyses tRNA(Gly) + glycine + ATP = glycyl-tRNA(Gly) + AMP + diphosphate. The chain is Glycine--tRNA ligase alpha subunit from Tolumonas auensis (strain DSM 9187 / NBRC 110442 / TA 4).